The chain runs to 237 residues: Putative N-acetylmuramoyl-L-alanine amidase (237 aa).

The region spanning 7–225 (ILIDAGHGGY…IANSIYLGLK (219 aa)) is the MurNAc-LAA domain.

Belongs to the N-acetylmuramoyl-L-alanine amidase 3 family.

Its subcellular location is the secreted. The catalysed reaction is Hydrolyzes the link between N-acetylmuramoyl residues and L-amino acid residues in certain cell-wall glycopeptides.. Its function is as follows. Cell-wall hydrolase involved in septum cleavage during cell division. This chain is Putative N-acetylmuramoyl-L-alanine amidase (amiB), found in Buchnera aphidicola subsp. Acyrthosiphon pisum (strain APS) (Acyrthosiphon pisum symbiotic bacterium).